The primary structure comprises 93 residues: YcgL domain-containing protein VSAL_I1068 (93 aa).

One can recognise a YcgL domain in the interval 1–84 (MYCSIYKSSK…PPENLLEKYK (84 aa)).

This is YcgL domain-containing protein VSAL_I1068 from Aliivibrio salmonicida (strain LFI1238) (Vibrio salmonicida (strain LFI1238)).